Consider the following 575-residue polypeptide: Manganese transporter SMF1 (575 aa).

Residues 1–70 (MVNVGPSHAA…TYVSKRQVMR (70 aa)) lie on the Extracellular side of the membrane. Ser24 is subject to Phosphoserine. Glycyl lysine isopeptide (Lys-Gly) (interchain with G-Cter in ubiquitin) cross-links involve residues Lys33 and Lys34. Residues 71-91 (DIFAKYLKFIGPGLMVSVAYI) traverse the membrane as a helical segment. The Cytoplasmic segment spans residues 92 to 108 (DPGNYSTAVDAGASNQF). The helical transmembrane segment at 109 to 129 (SLLCIILLSNFIAIFLQCLCI) threads the bilayer. Over 130–156 (KLGSVTGLDLSRACREYLPRWLNWTLY) the chain is Extracellular. The chain crosses the membrane as a helical span at residues 157 to 177 (FFAECAVIATDIAEVIGTAIA). At 178-179 (LN) the chain is on the cytoplasmic side. The helical transmembrane segment at 180 to 200 (ILIKVPLPAGVAITVVDVFLI) threads the bilayer. Residues 201–218 (MFTYKPGASSIRFIRIFE) lie on the Extracellular side of the membrane. A helical transmembrane segment spans residues 219 to 239 (CFVAVLVVGVCICFAIELAYI). Residues 240-266 (PKSTSVKQVFRGFVPSAQMFDHNGIYT) are Cytoplasmic-facing. A helical membrane pass occupies residues 267–287 (AISILGATVMPHSLFLGSALV). At 288–344 (QPRLLDYDVKHGNYTVSEEQDKVKKSKSTEEIMEEKYFNYRPTNAAIKYCMKYSMVE) the chain is on the extracellular side. A helical membrane pass occupies residues 345 to 365 (LSITLFTLALFVNCAILVVAG). Topologically, residues 366–396 (STLYNSPEADGADLFTIHELLSRNLAPAAGT) are cytoplasmic. A helical transmembrane segment spans residues 397-417 (IFMLALLLSGQSAGVVCTMSG). Over 418 to 463 (QIVSEGHINWKLQPWQRRLATRCISIIPCLVISICIGREALSKALN) the chain is Extracellular. Residues 464 to 484 (ASQVVLSIVLPFLVAPLIFFT) traverse the membrane as a helical segment. Residues 485–543 (CKKSIMKTEITVDHTEEDSHNHQNNNDRSAGSVIEQDGSSGMEIENGKDVKIVYMANNW) are Cytoplasmic-facing. Positions 498 to 517 (HTEEDSHNHQNNNDRSAGSV) are disordered. Residues 544–564 (IITVIAIIVWLFLSLLNVYAI) traverse the membrane as a helical segment. The Extracellular portion of the chain corresponds to 565 to 575 (VQLGMSHGDIS).

It belongs to the NRAMP family.

It is found in the cell membrane. It catalyses the reaction Mn(2+)(in) = Mn(2+)(out). High-affinity manganese transporter involved in manganese uptake from the extracellular environment. Also contributes to cellular accumulation of other divalent metal ions such as cadmium, cobalt, copper, iron and nickel. The chain is Manganese transporter SMF1 (SMF1) from Saccharomyces cerevisiae (strain ATCC 204508 / S288c) (Baker's yeast).